The sequence spans 150 residues: Phosphoribosyl-AMP cyclohydrolase (150 aa).

Asp93 is a Mg(2+) binding site. Residue Cys94 coordinates Zn(2+). Residues Asp95 and Asp97 each coordinate Mg(2+). Zn(2+)-binding residues include Cys112 and Cys119.

Belongs to the PRA-CH family. As to quaternary structure, homodimer. Requires Mg(2+) as cofactor. Zn(2+) is required as a cofactor.

The protein resides in the cytoplasm. The catalysed reaction is 1-(5-phospho-beta-D-ribosyl)-5'-AMP + H2O = 1-(5-phospho-beta-D-ribosyl)-5-[(5-phospho-beta-D-ribosylamino)methylideneamino]imidazole-4-carboxamide. It functions in the pathway amino-acid biosynthesis; L-histidine biosynthesis; L-histidine from 5-phospho-alpha-D-ribose 1-diphosphate: step 3/9. In terms of biological role, catalyzes the hydrolysis of the adenine ring of phosphoribosyl-AMP. This Rhizobium etli (strain CIAT 652) protein is Phosphoribosyl-AMP cyclohydrolase.